The sequence spans 511 residues: Maturase K (511 aa).

It belongs to the intron maturase 2 family. MatK subfamily.

The protein localises to the plastid. It is found in the chloroplast. Functionally, usually encoded in the trnK tRNA gene intron. Probably assists in splicing its own and other chloroplast group II introns. The protein is Maturase K of Trifolium burchellianum (Wild clover).